We begin with the raw amino-acid sequence, 434 residues long: MFS-type transporter AFUA_1G00970 (434 aa).

Transmembrane regions (helical) follow at residues 21–41 (VIGG…FGVF), 60–80 (WIGS…GVLV), 87–107 (VLLI…SLCS), 112–132 (IFLA…WPPF), 145–165 (LALG…SIMI), 182–202 (VLGF…TEPP), 240–260 (VFIS…NPFF), 278–298 (YMIS…GIVA), 301–321 (VGHY…SFCW), 327–347 (LTGL…ILSL), 364–384 (AIGF…PIGG), and 393–413 (LSLS…MGYA). A disordered region spans residues 201 to 225 (PPKQSQPQPRPALEATVEGGSASPT).

Belongs to the major facilitator superfamily. Monocarboxylate porter (TC 2.A.1.13) family.

It localises to the cell membrane. MFS-type transporter; part of the gene cluster that mediates the biosynthesis of fumigermin that inhibits germination of spores of the inducing S.rapamycinicus, and thus helps the fungus to defend resources in the shared habitat against a bacterial competitor. May be involved in the secretion of fumigermin. The polypeptide is MFS-type transporter AFUA_1G00970 (Aspergillus fumigatus (strain ATCC MYA-4609 / CBS 101355 / FGSC A1100 / Af293) (Neosartorya fumigata)).